The chain runs to 341 residues: D-aspartate oxidase (341 aa).

Residues Asp36, Arg37, Thr43, Ser44, Met50, Gly307, Ile311, and Ser312 each contribute to the FAD site. A Microbody targeting signal motif is present at residues 339–341; the sequence is SKL.

The protein belongs to the DAMOX/DASOX family. In terms of assembly, dimer or tetramer. Interacts with PEX5; the interaction is direct and required for localization of DDO to the peroxisome. Requires FAD as cofactor. As to expression, expressed in the small intestine (at protein level). Expressed in the ependymal cell layer of the telencephalic ventricles, hippocampus, thalamus, cerebellum, midbrain region, pons, olfactory bulbs, and cortex. Repressed in the testis. In terms of tissue distribution, expressed in the kidney, liver, stomach, pancreas, uterus, lactating breast, involuting mammary gland, brain, heart, lung, and skin. Expressed in kidney, liver, pancreas, and in the mammary gland regardless of lactation status.

It localises to the peroxisome matrix. It is found in the cytoplasm. The protein resides in the cytosol. It catalyses the reaction D-aspartate + O2 + H2O = oxaloacetate + H2O2 + NH4(+). The catalysed reaction is D-glutamate + O2 + H2O = H2O2 + 2-oxoglutarate + NH4(+). Its activity is regulated as follows. Inhibited by the benzodiazepine olanzapine; chronic systemic administration of the benzodiazepine increases levels of D-aspartate and L-glutamate in the prefrontal cortex. Efficiently inhibited by 5-aminonicotinic acid (5-AN) and 1,4-Dihydropyrido[2,3-b]pyrazine-2,3-dione (DPPD). Inhibited by aminooxyacetic acid, thiolactomycin, anthranilic acid, malonate, meso-tartrate and L-tartrate. Benzoate has no effect on activity. Selectively catalyzes the oxidative deamination of acidic amino acids. Suppresses the level of D-aspartate in the brain, an amino acid that can act as an agonist for glutamate receptors. Protects the organism from the toxicity of D-amino acids. May also function in the intestine. Its function is as follows. Selectively catalyzes the oxidative deamination of acidic amino acids. In terms of biological role, does not exhibit D-aspartate oxidase activity. In Mus musculus (Mouse), this protein is D-aspartate oxidase (Ddo).